Consider the following 454-residue polypeptide: GA-binding protein alpha chain (454 aa).

The 84-residue stretch at 168–251 (AALEGYRKEQ…SHLELLRKYV (84 aa)) folds into the PNT domain. A disordered region spans residues 297–316 (QRAPRISGEDRSSPGNRTGN). Phosphoserine is present on Ser303. The segment at residues 320–400 (IQLWQFLLEL…QGKRFVYKFV (81 aa)) is a DNA-binding region (ETS).

The protein belongs to the ETS family. In terms of assembly, heterotetramer of two alpha and two beta subunits.

It is found in the nucleus. Its function is as follows. Transcription factor capable of interacting with purine rich repeats (GA repeats). Positively regulates transcription of transcriptional repressor RHIT/ZNF205. Functionally, (Microbial infection) Necessary for the expression of the Adenovirus E4 gene. This chain is GA-binding protein alpha chain (GABPA), found in Homo sapiens (Human).